A 466-amino-acid polypeptide reads, in one-letter code: MNYLPIFIDIKQKPCLVVGGGSIAYRKINLLLKAYGQVTCIAKSSCKNVAKLVNNKKIIYIERSFESSDVNGQVLIISATNNATLNKKVSELASQNNIPVNVIDSPDLCTFIMPSIVDRSPILIAISSAGKAPVLARIIRAKLESTLPHAYGKLAELAGNFRDQVKAKFSRIEDKRYFWEEIFSGIIAEKVFSGKIQEAKADLQAQLNNTVEAQVGAVYLVGGGPGDPDLLTFRALRLMQQADVVLYDRLVSDRVMELVRRDAQLIYVGKECDNHAVPQGDINQLLVDLAKEGRRVCRLKGGDPFIFGRGGEEIETLAENGIPFQVVPGITAASGCSTYSGIPLTHRDYSQSCRFVTGHLKDGSMNLPWHELAIEQQTIVFYMALNSVEYLSGQLIIHNMRPDMPVALVEKGTTPEQKVYITTLKELPNLVENETIHAPTLIIIGEVVKLREKLNWFDAKPISSKK.

Residues methionine 1–leucine 203 form a precorrin-2 dehydrogenase /sirohydrochlorin ferrochelatase region. Residues serine 22–isoleucine 23 and lysine 43–serine 44 each bind NAD(+). Phosphoserine is present on serine 128. The segment at glycine 216–lysine 466 is uroporphyrinogen-III C-methyltransferase. An S-adenosyl-L-methionine-binding site is contributed by proline 225. Catalysis depends on aspartate 248, which acts as the Proton acceptor. The active-site Proton donor is the lysine 270. Residues glycine 301–aspartate 303, isoleucine 306, threonine 331–alanine 332, methionine 383, and glycine 412 contribute to the S-adenosyl-L-methionine site.

In the N-terminal section; belongs to the precorrin-2 dehydrogenase / sirohydrochlorin ferrochelatase family. The protein in the C-terminal section; belongs to the precorrin methyltransferase family.

The enzyme catalyses uroporphyrinogen III + 2 S-adenosyl-L-methionine = precorrin-2 + 2 S-adenosyl-L-homocysteine + H(+). It carries out the reaction precorrin-2 + NAD(+) = sirohydrochlorin + NADH + 2 H(+). It catalyses the reaction siroheme + 2 H(+) = sirohydrochlorin + Fe(2+). It participates in cofactor biosynthesis; adenosylcobalamin biosynthesis; precorrin-2 from uroporphyrinogen III: step 1/1. The protein operates within cofactor biosynthesis; adenosylcobalamin biosynthesis; sirohydrochlorin from precorrin-2: step 1/1. It functions in the pathway porphyrin-containing compound metabolism; siroheme biosynthesis; precorrin-2 from uroporphyrinogen III: step 1/1. Its pathway is porphyrin-containing compound metabolism; siroheme biosynthesis; siroheme from sirohydrochlorin: step 1/1. It participates in porphyrin-containing compound metabolism; siroheme biosynthesis; sirohydrochlorin from precorrin-2: step 1/1. Functionally, multifunctional enzyme that catalyzes the SAM-dependent methylations of uroporphyrinogen III at position C-2 and C-7 to form precorrin-2 via precorrin-1. Then it catalyzes the NAD-dependent ring dehydrogenation of precorrin-2 to yield sirohydrochlorin. Finally, it catalyzes the ferrochelation of sirohydrochlorin to yield siroheme. This is Siroheme synthase from Vesicomyosocius okutanii subsp. Calyptogena okutanii (strain HA).